Here is a 165-residue protein sequence, read N- to C-terminus: Nucleotide-binding protein Pro_0479 (165 aa).

This sequence belongs to the YajQ family.

In terms of biological role, nucleotide-binding protein. The sequence is that of Nucleotide-binding protein Pro_0479 from Prochlorococcus marinus (strain SARG / CCMP1375 / SS120).